Here is a 421-residue protein sequence, read N- to C-terminus: Granaticin polyketide putative beta-ketoacyl synthase 1 (421 aa).

The Ketosynthase family 3 (KS3) domain occupies 2 to 416 (TRRVVITGVG…GFQSAMVLHR (415 aa)). Residues C169, H309, and H346 each act as for beta-ketoacyl synthase activity in the active site.

Belongs to the thiolase-like superfamily. Beta-ketoacyl-ACP synthases family.

Its pathway is antibiotic biosynthesis; granaticin biosynthesis. The sequence is that of Granaticin polyketide putative beta-ketoacyl synthase 1 (gra-orf1) from Streptomyces violaceoruber.